The following is an 885-amino-acid chain: Cadherin-related family member 3 (885 aa).

The first 19 residues, 1–19 (MQEAIILLALLGAMSGGEA), serve as a signal peptide directing secretion. Residues 20–713 (LHLILLPATG…VYSPSAWYVP (694 aa)) are Extracellular-facing. 6 consecutive Cadherin domains span residues 23 to 132 (ILLP…PPQF), 136 to 236 (LAEG…VPRF), 237 to 344 (TSPT…NPAT), 346 to 466 (QKFT…RPSY), 462 to 566 (DRPS…KPIC), and 567 to 695 (TPNS…RPRV). 2 N-linked (GlcNAc...) asparagine glycosylation sites follow: Asn-186 and Asn-257. N-linked (GlcNAc...) asparagine glycosylation occurs at Asn-624. Residues 714-734 (FVITLGSILLLGLLVYLVVLL) traverse the membrane as a helical segment. At 735 to 885 (AKAIHRHCPC…RAYPKPHPGK (151 aa)) the chain is on the cytoplasmic side. Residues 808 to 885 (MPKWKESSHQ…RAYPKPHPGK (78 aa)) form a disordered region.

As to quaternary structure, (Microbial infection) Interacts (via N-terminus) with human rhinovirus C capsid proteins VP1, VP2 and VP3. In terms of tissue distribution, expressed in bronchial epithelium from adults and in fetal lung tissue.

Its subcellular location is the cell membrane. Its function is as follows. Cadherins are calcium-dependent cell adhesion proteins. They preferentially interact with themselves in a homophilic manner in connecting cells; cadherins may thus contribute to the sorting of heterogeneous cell types. In terms of biological role, (Microbial infection) Acts as a receptor for human rhinovirus C. The chain is Cadherin-related family member 3 (CDHR3) from Homo sapiens (Human).